The chain runs to 549 residues: Probable amidase (549 aa).

Catalysis depends on charge relay system residues Lys-132 and Ser-209. Ser-233 acts as the Acyl-ester intermediate in catalysis.

Belongs to the amidase family.

The enzyme catalyses a monocarboxylic acid amide + H2O = a monocarboxylate + NH4(+). In Saccharomyces cerevisiae (strain ATCC 204508 / S288c) (Baker's yeast), this protein is Probable amidase (AMD2).